We begin with the raw amino-acid sequence, 472 residues long: Carbohydrate sulfotransferase 3 (472 aa).

Residues Met1–Lys19 are Cytoplasmic-facing. A helical; Signal-anchor for type II membrane protein transmembrane segment spans residues Ile20 to Ile38. Residues Glu39 to Thr472 are Lumenal-facing. N-linked (GlcNAc...) asparagine glycosylation is found at Asn63, Asn74, and Asn96. Residue Thr135–Phe141 coordinates 3'-phosphoadenylyl sulfate. N-linked (GlcNAc...) asparagine glycosylation is present at Asn250. Arg295–Ser303 contributes to the 3'-phosphoadenylyl sulfate binding site. N-linked (GlcNAc...) asparagine glycans are attached at residues Asn413 and Asn457.

This sequence belongs to the sulfotransferase 1 family. Gal/GlcNAc/GalNAc subfamily. N-glycosylated. In terms of tissue distribution, widely expressed. Highly expressed in spleen, lung, eye and stomach. Constitutively expressed at low level during the mid- to late-gestation period. Expressed in the brain in a temporally controlled manner: peaks at 2 weeks after birth in the cerebellum, but at 3 weeks in the cerebrum. Localizes to stromal cells in the bone marrow, and stromal cells in the marginal zone and red pulp of the spleen, but the sense probe did not.

It is found in the golgi apparatus membrane. It catalyses the reaction chondroitin beta-D-glucuronate + n 3'-phosphoadenylyl sulfate = chondroitin 6'-sulfate + n adenosine 3',5'-bisphosphate + n H(+). The catalysed reaction is 3'-phosphoadenylyl sulfate + keratan = adenosine 3',5'-bisphosphate + keratan 6'-sulfate.. Sulfotransferase that utilizes 3'-phospho-5'-adenylyl sulfate (PAPS) as sulfonate donor to catalyze the transfer of sulfate to position 6 of the N-acetylgalactosamine (GalNAc) residue of chondroitin. Chondroitin sulfate constitutes the predominant proteoglycan present in cartilage and is distributed on the surfaces of many cells and extracellular matrices. Catalyzes with a lower efficiency the sulfation of Gal residues of keratan sulfate, another glycosaminoglycan. Can also catalyze the sulfation of the Gal residues in sialyl N-acetyllactosamine (sialyl LacNAc) oligosaccharides. May play a role in the maintenance of naive T-lymphocytes in the spleen. This Mus musculus (Mouse) protein is Carbohydrate sulfotransferase 3 (Chst3).